A 258-amino-acid chain; its full sequence is Sec-independent protein translocase protein TatC (258 aa).

Over S2–C23 the chain is Cytoplasmic. Residues I24–L44 form a helical membrane-spanning segment. Topologically, residues V45 to T75 are periplasmic. Residues F76–A96 form a helical membrane-spanning segment. Residues P97–S115 are Cytoplasmic-facing. Residues L116–F136 traverse the membrane as a helical segment. Over L137–S156 the chain is Periplasmic. The helical transmembrane segment at F157–L177 threads the bilayer. The Cytoplasmic portion of the chain corresponds to L178–K192. A helical membrane pass occupies residues R193–P210. A topological domain (periplasmic) is located at residue D211. A helical membrane pass occupies residues V212–F232. Residues S233 to E258 lie on the Cytoplasmic side of the membrane.

It belongs to the TatC family. In terms of assembly, the Tat system comprises two distinct complexes: a TatABC complex, containing multiple copies of TatA, TatB and TatC subunits, and a separate TatA complex, containing only TatA subunits. Substrates initially bind to the TatABC complex, which probably triggers association of the separate TatA complex to form the active translocon. TatC can form a distinct, stable, multimeric complex independent of TatA and TatB. Each of TatA, TatB and TatC are able to interact in pairs without the third partner. Interacts with the signal sequence of DmsA and DmsD.

The protein localises to the cell inner membrane. Functionally, part of the twin-arginine translocation (Tat) system that transports large folded proteins containing a characteristic twin-arginine motif in their signal peptide across membranes. Together with TatB, TatC is part of a receptor directly interacting with Tat signal peptides. This is Sec-independent protein translocase protein TatC from Escherichia coli (strain K12).